The primary structure comprises 164 residues: NADH-quinone oxidoreductase subunit I (164 aa).

4Fe-4S ferredoxin-type domains lie at 55 to 85 and 95 to 124; these read LRRY…IDAE and TRYD…EGPN. [4Fe-4S] cluster contacts are provided by cysteine 65, cysteine 68, cysteine 71, cysteine 75, cysteine 104, cysteine 107, cysteine 110, and cysteine 114.

Belongs to the complex I 23 kDa subunit family. NDH-1 is composed of 14 different subunits. Subunits NuoA, H, J, K, L, M, N constitute the membrane sector of the complex. The cofactor is [4Fe-4S] cluster.

It is found in the cell inner membrane. The catalysed reaction is a quinone + NADH + 5 H(+)(in) = a quinol + NAD(+) + 4 H(+)(out). Its function is as follows. NDH-1 shuttles electrons from NADH, via FMN and iron-sulfur (Fe-S) centers, to quinones in the respiratory chain. The immediate electron acceptor for the enzyme in this species is believed to be ubiquinone. Couples the redox reaction to proton translocation (for every two electrons transferred, four hydrogen ions are translocated across the cytoplasmic membrane), and thus conserves the redox energy in a proton gradient. The protein is NADH-quinone oxidoreductase subunit I of Ruegeria sp. (strain TM1040) (Silicibacter sp.).